Consider the following 536-residue polypeptide: Protein ST7 homolog (536 aa).

2 helical membrane-spanning segments follow: residues 3–23 (CSWTFLWLLWIALVAVLLFAL) and 49–69 (FYVALTGTSSLVSGIILIFEW). Residues 191 to 218 (LAEEESETVSQAENLLRRALRAIESTLN) are a coiled coil. The chain crosses the membrane as a helical span at residues 465–485 (TLMMLLQTFICLAICILAVLA).

The protein belongs to the ST7 family.

The protein resides in the membrane. In Caenorhabditis elegans, this protein is Protein ST7 homolog.